We begin with the raw amino-acid sequence, 620 residues long: 1-deoxy-D-xylulose-5-phosphate synthase (620 aa).

Thiamine diphosphate-binding positions include H80 and 121 to 123; that span reads GHS. D152 is a binding site for Mg(2+). Residues 153–154, N181, Y288, and E370 each bind thiamine diphosphate; that span reads GA. Mg(2+) is bound at residue N181.

It belongs to the transketolase family. DXPS subfamily. In terms of assembly, homodimer. It depends on Mg(2+) as a cofactor. Thiamine diphosphate is required as a cofactor.

It carries out the reaction D-glyceraldehyde 3-phosphate + pyruvate + H(+) = 1-deoxy-D-xylulose 5-phosphate + CO2. Its pathway is metabolic intermediate biosynthesis; 1-deoxy-D-xylulose 5-phosphate biosynthesis; 1-deoxy-D-xylulose 5-phosphate from D-glyceraldehyde 3-phosphate and pyruvate: step 1/1. Its function is as follows. Catalyzes the acyloin condensation reaction between C atoms 2 and 3 of pyruvate and glyceraldehyde 3-phosphate to yield 1-deoxy-D-xylulose-5-phosphate (DXP). The chain is 1-deoxy-D-xylulose-5-phosphate synthase from Salmonella choleraesuis (strain SC-B67).